We begin with the raw amino-acid sequence, 313 residues long: Methionyl-tRNA formyltransferase (313 aa).

(6S)-5,6,7,8-tetrahydrofolate is bound at residue 109–112 (SLLP).

It belongs to the Fmt family.

The enzyme catalyses L-methionyl-tRNA(fMet) + (6R)-10-formyltetrahydrofolate = N-formyl-L-methionyl-tRNA(fMet) + (6S)-5,6,7,8-tetrahydrofolate + H(+). Functionally, attaches a formyl group to the free amino group of methionyl-tRNA(fMet). The formyl group appears to play a dual role in the initiator identity of N-formylmethionyl-tRNA by promoting its recognition by IF2 and preventing the misappropriation of this tRNA by the elongation apparatus. This is Methionyl-tRNA formyltransferase from Thermotoga sp. (strain RQ2).